Here is a 354-residue protein sequence, read N- to C-terminus: B-cell differentiation antigen CD72 (354 aa).

At 1 to 95 the chain is on the cytoplasmic side; the sequence is MADAITYADL…PRCPTVCLQY (95 aa). A phosphotyrosine; by LYN mark is found at tyrosine 7 and tyrosine 39. Residues 96–116 traverse the membrane as a helical; Signal-anchor for type II membrane protein segment; it reads FLLGLLVSCLMLGVAVICLGV. Over 117–354 the chain is Extracellular; it reads RYLQVSRQFQ…FRFPDGINLN (238 aa). N-linked (GlcNAc...) asparagine glycosylation occurs at asparagine 136. A C-type lectin domain is found at 231–342; it reads CCPCGWIPYQ…AELHPCICES (112 aa). 3 disulfide bridges follow: cysteine 232–cysteine 243, cysteine 260–cysteine 340, and cysteine 315–cysteine 332.

Homodimer; disulfide-linked. Associates with CD5. Interacts (tyrosine phosphorylated) with PTPN6/SHP-1. Phosphorylated upon engagement of the B-cell receptor, probably by LYN or SYK. Phosphorylation at Tyr-7 is important for interaction with PTPN6/SHP-1. In terms of tissue distribution, pre-B-cells and B-cells but not terminally differentiated plasma cells.

It localises to the membrane. In terms of biological role, co-receptor of B cell receptor (BCR) that plays both positive and negative roles on B-cell functions. Recognizes the Sm/ribonucleoprotein (RNP) self-antigen ligand, and coligation of CD72 and BCR inhibits BCR signaling. Mechanistically, ligand binding leads to the recruitment of PTPN6/SHP-1 to the BCR complex which is inhibitory to BCR signaling. Acts also as a ligand for CD5 and thereby plays a critical role in maintaining regulatory T and B-cell homeostasis. This chain is B-cell differentiation antigen CD72 (Cd72), found in Mus musculus (Mouse).